Here is a 153-residue protein sequence, read N- to C-terminus: Movement protein (153 aa).

Disordered regions lie at residues 1 to 24 (MAQEGGAVEQFGQWLWSNPIEQDP) and 121 to 153 (PWVATLIPSQSAGPPQRSSEPKRLTGRNSRNQR). Polar residues predominate over residues 121–138 (PWVATLIPSQSAGPPQRS).

It belongs to the luteoviruses movement protein family.

Transports viral genome to neighboring plant cells directly through plasmosdesmata, without any budding. The movement protein allows efficient cell to cell propagation, by bypassing the host cell wall barrier. This Avena byzantina (Oat) protein is Movement protein.